The sequence spans 249 residues: Phosphoribosylaminoimidazole-succinocarboxamide synthase (249 aa).

This sequence belongs to the SAICAR synthetase family.

It carries out the reaction 5-amino-1-(5-phospho-D-ribosyl)imidazole-4-carboxylate + L-aspartate + ATP = (2S)-2-[5-amino-1-(5-phospho-beta-D-ribosyl)imidazole-4-carboxamido]succinate + ADP + phosphate + 2 H(+). It participates in purine metabolism; IMP biosynthesis via de novo pathway; 5-amino-1-(5-phospho-D-ribosyl)imidazole-4-carboxamide from 5-amino-1-(5-phospho-D-ribosyl)imidazole-4-carboxylate: step 1/2. The sequence is that of Phosphoribosylaminoimidazole-succinocarboxamide synthase from Chloroflexus aurantiacus (strain ATCC 29366 / DSM 635 / J-10-fl).